Here is a 694-residue protein sequence, read N- to C-terminus: Elongation factor G (694 aa).

One can recognise a tr-type G domain in the interval 8–283 (ERYRNIGIMA…AVIDYLPAPV (276 aa)). Residues 17-24 (AHIDAGKT), 81-85 (DTPGH), and 135-138 (NKMD) each bind GTP.

This sequence belongs to the TRAFAC class translation factor GTPase superfamily. Classic translation factor GTPase family. EF-G/EF-2 subfamily.

It is found in the cytoplasm. Functionally, catalyzes the GTP-dependent ribosomal translocation step during translation elongation. During this step, the ribosome changes from the pre-translocational (PRE) to the post-translocational (POST) state as the newly formed A-site-bound peptidyl-tRNA and P-site-bound deacylated tRNA move to the P and E sites, respectively. Catalyzes the coordinated movement of the two tRNA molecules, the mRNA and conformational changes in the ribosome. This chain is Elongation factor G, found in Paramagnetospirillum magneticum (strain ATCC 700264 / AMB-1) (Magnetospirillum magneticum).